Reading from the N-terminus, the 188-residue chain is tRNA(Phe) 7-((3-amino-3-carboxypropyl)-4-demethylwyosine(37)-N(4))-methyltransferase (188 aa).

Belongs to the TYW3 family.

The catalysed reaction is 4-demethyl-7-[(3S)-3-amino-3-carboxypropyl]wyosine(37) in tRNA(Phe) + S-adenosyl-L-methionine = 7-[(3S)-3-amino-3-carboxypropyl]wyosine(37) in tRNA(Phe) + S-adenosyl-L-homocysteine + H(+). In terms of biological role, S-adenosyl-L-methionine-dependent methyltransferase that acts as a component of the wyosine derivatives biosynthesis pathway. Probably methylates N-4 position of wybutosine-86 to produce wybutosine-72. In Aeropyrum pernix (strain ATCC 700893 / DSM 11879 / JCM 9820 / NBRC 100138 / K1), this protein is tRNA(Phe) 7-((3-amino-3-carboxypropyl)-4-demethylwyosine(37)-N(4))-methyltransferase.